The primary structure comprises 66 residues: uncharacterized protein (66 aa).

Residues 1 to 20 (MIALAYLATVAIAAMVLAVA) form a hydrophobic region.

This is an uncharacterized protein from Streptomyces lividans.